Reading from the N-terminus, the 821-residue chain is Kinetochore protein SLK19 (821 aa).

Disordered stretches follow at residues 1–52 (MNEV…SQFV) and 99–153 (FDDK…NDKE). T7 bears the Phosphothreonine; by CDC28 mark. Residues 15–51 (QAQQREQNSENCSQERNPRTFNSEPDSSFNSPGSSQF) are compositionally biased toward polar residues. 2 stretches are compositionally biased toward basic and acidic residues: residues 99–122 (FDDK…DKHV) and 136–153 (SSEK…NDKE). Phosphoserine occurs at positions 188 and 189. Residue S201 is modified to Phosphoserine; by CDC28. S216 carries the post-translational modification Phosphoserine. Phosphothreonine is present on T273. Disordered regions lie at residues 274–298 (PLYE…DDNQ) and 699–720 (EQNN…RDDE). At S283 the chain carries Phosphoserine. Positions 310-821 (AKRNEELTDQ…LLKLLENEKK (512 aa)) form a coiled coil.

Post-translationally, cleaved by ESP1 at the onset of anaphase. In terms of processing, phosphorylated by CDC5/Polo-like kinase at the onset of anaphase. Phosphorylation takes places at proximity to cleavage sites and is required for an efficient cleavage by ESP1. Phosphorylated also by CDC28.

It is found in the chromosome. The protein localises to the centromere. The protein resides in the kinetochore. It localises to the cytoplasm. Its subcellular location is the cytoskeleton. It is found in the microtubule organizing center. The protein localises to the spindle pole body. Its function is as follows. Has a role in spindle assembly and stability. Required to ensure a timely exit form mitosis. Essential to maintain pre-anaphase spindle polarity. Associates to the plus ends of the microtubules at the kinetochore and spindle midzone. A component of the FEAR (CDC14 Early Anaphase Release) network which promotes CDC14 release from the nucleolus during early anaphase. Required for proper chromosome segregation during meiosis I where it prevents premature sister chromatid separation. The sequence is that of Kinetochore protein SLK19 (SLK19) from Saccharomyces cerevisiae (strain ATCC 204508 / S288c) (Baker's yeast).